We begin with the raw amino-acid sequence, 588 residues long: Ufm1-specific protease (588 aa).

Active-site residues include Cys-420, Asp-544, and His-546.

Belongs to the peptidase C78 family. Interacts with odr-4.

It localises to the endoplasmic reticulum membrane. It is found in the cytoplasm. The protein resides in the perinuclear region. Functionally, thiol protease which recognizes and hydrolyzes the peptide bond at the C-terminal Gly of ufm-1, a ubiquitin-like modifier protein bound to a number of target proteins. Required, with oct-4, for the localization of a subset of 7 transmembrane domain odorant receptors, including odr-10, to the cilia of olfactory neurons AWA and AWC. Operates in aggregation behavior, and responses to oxygen levels. The sequence is that of Ufm1-specific protease from Caenorhabditis briggsae.